The chain runs to 406 residues: Argininosuccinate synthase (406 aa).

ATP contacts are provided by residues 12 to 20 (AYSGGLDTS) and Ala-40. L-citrulline-binding residues include Tyr-92 and Ser-97. Gly-122 contacts ATP. The L-aspartate site is built by Thr-124, Asn-128, and Asp-129. Residue Asn-128 coordinates L-citrulline. Residues Arg-132, Ser-181, Ser-190, Glu-266, and Tyr-278 each contribute to the L-citrulline site.

Belongs to the argininosuccinate synthase family. Type 1 subfamily. As to quaternary structure, homotetramer.

It localises to the cytoplasm. The enzyme catalyses L-citrulline + L-aspartate + ATP = 2-(N(omega)-L-arginino)succinate + AMP + diphosphate + H(+). The protein operates within amino-acid biosynthesis; L-arginine biosynthesis; L-arginine from L-ornithine and carbamoyl phosphate: step 2/3. The chain is Argininosuccinate synthase from Serratia proteamaculans (strain 568).